Here is a 295-residue protein sequence, read N- to C-terminus: Alpha-soluble NSF attachment protein (295 aa).

Position 1 is an N-acetylmethionine (M1). Phosphoserine occurs at positions 26, 29, and 195.

The protein belongs to the SNAP family. Interacts with PRKCABP, and disrupts the interaction between GRIA2 and PRKCABP, leading to the internalization of GRIA2. Found in a complex with VAMP8. Component of a SNARE-like complex that contains at least ZW10, USE1L, RINT1, STX18 and NAPA/SNAP-alpha. Interacts with VTI1A. Interacts with STX12. Interacts with GNA12 (via N-terminus); the interaction promotes CDH5 localization to plasma membrane.

It localises to the cell membrane. Required for vesicular transport between the endoplasmic reticulum and the Golgi apparatus. Together with GNA12 promotes CDH5 localization to plasma membrane. In Mus musculus (Mouse), this protein is Alpha-soluble NSF attachment protein (Napa).